The chain runs to 491 residues: HEPACAM family member 2 (491 aa).

Positions methionine 1–serine 18 are cleaved as a signal peptide. 3 N-linked (GlcNAc...) asparagine glycosylation sites follow: asparagine 73, asparagine 117, and asparagine 153. Ig-like C2-type domains follow at residues proline 137–isoleucine 221 and proline 223–threonine 319. Disulfide bonds link cysteine 158-cysteine 207 and cysteine 258-cysteine 303. Asparagine 308 is a glycosylation site (N-linked (GlcNAc...) asparagine). Residues leucine 340–tryptophan 360 traverse the membrane as a helical segment. Residues lysine 361–isoleucine 491 are Cytoplasmic-facing. Residues glutamine 444–glutamine 454 show a composition bias toward polar residues. 2 disordered regions span residues glutamine 444–aspartate 466 and glutamate 472–isoleucine 491. Positions glutamate 472 to glycine 482 are enriched in basic and acidic residues.

Poly-ADP-ribosylated (PARsylated) by tankyrase TNKS during late G2 and prophase, leading to translocation to mitotic centrosomes. Post-translationally, N-glycosylated.

It is found in the golgi apparatus membrane. The protein localises to the cytoplasm. The protein resides in the cytoskeleton. It localises to the spindle. Its subcellular location is the microtubule organizing center. It is found in the centrosome. The protein localises to the midbody. Required during prometaphase for centrosome maturation. Following poly-ADP-ribosylation (PARsylation) by TNKS, translocates from the Golgi apparatus to mitotic centrosomes and plays a key role in the formation of robust microtubules for prompt movement of chromosomes: anchors AKAP9/CG-NAP, a scaffold protein of the gamma-tubulin ring complex and promotes centrosome maturation. The sequence is that of HEPACAM family member 2 (HEPACAM2) from Bos taurus (Bovine).